Reading from the N-terminus, the 95-residue chain is Co-chaperonin GroES (95 aa).

This sequence belongs to the GroES chaperonin family. In terms of assembly, heptamer of 7 subunits arranged in a ring. Interacts with the chaperonin GroEL.

The protein localises to the cytoplasm. Together with the chaperonin GroEL, plays an essential role in assisting protein folding. The GroEL-GroES system forms a nano-cage that allows encapsulation of the non-native substrate proteins and provides a physical environment optimized to promote and accelerate protein folding. GroES binds to the apical surface of the GroEL ring, thereby capping the opening of the GroEL channel. The chain is Co-chaperonin GroES from Francisella tularensis subsp. tularensis (strain FSC 198).